The sequence spans 382 residues: MQMIKKMVLSETFPGILLIFFTFLALLCKNSSLSVIYTDFFHANFTVGFDHFQISKSLDLWINDGLIAIFFLCIGLELKYEILRGQLKNIRAVSLPIFGALGGMITPALIFIAINYAHDFAMKGWAIPTATDIAFAVGILMLLGNKIPTSLKLFLLSLAIFDDLGAIVIIALFYTDQLSALAIIICLFCIFALLLLNYYHITHLSLYVLVGVVLWIAMLKSGVHATLAGVIISLFIPLDTKNKKPYLHEVLKDLNPWVVYFILPLFAFANAGIDIRDMHLGSVFSPVSLGIILGLFLGKQLGVFTFCFIAIKLKLAKLPENIKYGKFYGICILTGIGFTMSLFIDGLAYKNSDIFEYADKLAILVASFLSAIVGFIYLKIVK.

11 helical membrane-spanning segments follow: residues 7-27, 58-78, 94-114, 124-144, 153-173, 178-198, 199-219, 255-275, 291-311, 327-347, and 361-381; these read MVLS…LALL, LDLW…GLEL, SLPI…FIAI, GWAI…MLLG, LFLL…IALF, LSAL…LLNY, YHIT…IAML, NPWV…GIDI, IILG…FIAI, FYGI…IDGL, and LAIL…LKIV.

The protein belongs to the NhaA Na(+)/H(+) (TC 2.A.33) antiporter family.

The protein localises to the cell inner membrane. It carries out the reaction Na(+)(in) + 2 H(+)(out) = Na(+)(out) + 2 H(+)(in). Na(+)/H(+) antiporter that extrudes sodium in exchange for external protons. This is Na(+)/H(+) antiporter NhaA 2 from Campylobacter jejuni (strain RM1221).